Here is a 517-residue protein sequence, read N- to C-terminus: Cytochrome P450 CYP72A616 (517 aa).

A helical membrane pass occupies residues 5-25 (VLGALAALLAAAAAWVMRAAA). Cysteine 465 contributes to the heme binding site.

The protein belongs to the cytochrome P450 family. In terms of tissue distribution, mainly expressed in leaves and, at low levels, in roots, fruits and stems.

The protein localises to the membrane. It functions in the pathway steroid metabolism; cholesterol metabolism. Functionally, involved in the biosynthesis of spiroketal steroid and saponin natural products from cholesterol such as diosgenin and analogs (e.g. furostanol and spirostanol), plant defense compounds used as main precursors for the industrial production of steroid hormones. During the 5,6-spiroketalization of cholesterol, may catalyze the 27-monohydroxylation of furostanol-type steroid to an intermediate product that undergoes a stereospecific formation of the terminal heterocycle to yield diosgenin. The polypeptide is Cytochrome P450 CYP72A616 (Paris polyphylla (Daiswa polyphylla)).